We begin with the raw amino-acid sequence, 81 residues long: Short neurotoxin 2 (81 aa).

The N-terminal stretch at 1-21 (MKTLLLTLVVVTIVCLDLGYT) is a signal peptide. 4 cysteine pairs are disulfide-bonded: Cys24/Cys43, Cys38/Cys60, Cys62/Cys73, and Cys74/Cys79.

It belongs to the three-finger toxin family. Short-chain subfamily. Type I alpha-neurotoxin sub-subfamily. In terms of tissue distribution, expressed by the venom gland.

The protein localises to the secreted. In terms of biological role, binds to muscle nicotinic acetylcholine receptor (nAChR) and inhibit acetylcholine from binding to the receptor, thereby impairing neuromuscular transmission. This is Short neurotoxin 2 from Tropidechis carinatus (Australian rough-scaled snake).